The primary structure comprises 505 residues: Aspartyl/glutamyl-tRNA(Asn/Gln) amidotransferase subunit B (505 aa).

The protein belongs to the GatB/GatE family. GatB subfamily. As to quaternary structure, heterotrimer of A, B and C subunits.

The catalysed reaction is L-glutamyl-tRNA(Gln) + L-glutamine + ATP + H2O = L-glutaminyl-tRNA(Gln) + L-glutamate + ADP + phosphate + H(+). It catalyses the reaction L-aspartyl-tRNA(Asn) + L-glutamine + ATP + H2O = L-asparaginyl-tRNA(Asn) + L-glutamate + ADP + phosphate + 2 H(+). Allows the formation of correctly charged Asn-tRNA(Asn) or Gln-tRNA(Gln) through the transamidation of misacylated Asp-tRNA(Asn) or Glu-tRNA(Gln) in organisms which lack either or both of asparaginyl-tRNA or glutaminyl-tRNA synthetases. The reaction takes place in the presence of glutamine and ATP through an activated phospho-Asp-tRNA(Asn) or phospho-Glu-tRNA(Gln). The protein is Aspartyl/glutamyl-tRNA(Asn/Gln) amidotransferase subunit B of Corynebacterium jeikeium (strain K411).